The sequence spans 573 residues: Phosphoenolpyruvate-protein phosphotransferase (573 aa).

His-190 acts as the Tele-phosphohistidine intermediate in catalysis. Arg-297 and Arg-334 together coordinate phosphoenolpyruvate. 2 residues coordinate Mg(2+): Glu-433 and Asp-457. Residues Asn-456–Asp-457 and Arg-467 each bind phosphoenolpyruvate. The active-site Proton donor is Cys-504.

This sequence belongs to the PEP-utilizing enzyme family. As to quaternary structure, homodimer. Requires Mg(2+) as cofactor.

Its subcellular location is the cytoplasm. It catalyses the reaction L-histidyl-[protein] + phosphoenolpyruvate = N(pros)-phospho-L-histidyl-[protein] + pyruvate. Functionally, general (non sugar-specific) component of the phosphoenolpyruvate-dependent sugar phosphotransferase system (sugar PTS). This major carbohydrate active-transport system catalyzes the phosphorylation of incoming sugar substrates concomitantly with their translocation across the cell membrane. Enzyme I transfers the phosphoryl group from phosphoenolpyruvate (PEP) to the phosphoryl carrier protein (HPr). The protein is Phosphoenolpyruvate-protein phosphotransferase (ptsI) of Borreliella burgdorferi (strain ATCC 35210 / DSM 4680 / CIP 102532 / B31) (Borrelia burgdorferi).